Consider the following 224-residue polypeptide: Ribonuclease T (224 aa).

Residues 1–11 are compositionally biased toward acidic residues; the sequence is MSEDLYEDDLD. The interval 1–22 is disordered; that stretch reads MSEDLYEDDLDTQGSSGPRHPM. The Exonuclease domain occupies 32 to 206; it reads VVVDVETGGF…YDTEKTAELF (175 aa). Mg(2+) contacts are provided by Asp35, Glu37, His193, and Asp198. His193 serves as the catalytic Proton donor/acceptor.

It belongs to the RNase T family. In terms of assembly, homodimer. Mg(2+) is required as a cofactor.

In terms of biological role, trims short 3' overhangs of a variety of RNA species, leaving a one or two nucleotide 3' overhang. Responsible for the end-turnover of tRNA: specifically removes the terminal AMP residue from uncharged tRNA (tRNA-C-C-A). Also appears to be involved in tRNA biosynthesis. The protein is Ribonuclease T of Pseudomonas putida (strain ATCC 700007 / DSM 6899 / JCM 31910 / BCRC 17059 / LMG 24140 / F1).